A 588-amino-acid polypeptide reads, in one-letter code: Proline--tRNA ligase (588 aa).

Belongs to the class-II aminoacyl-tRNA synthetase family. ProS type 1 subfamily. Homodimer.

Its subcellular location is the cytoplasm. The catalysed reaction is tRNA(Pro) + L-proline + ATP = L-prolyl-tRNA(Pro) + AMP + diphosphate. Functionally, catalyzes the attachment of proline to tRNA(Pro) in a two-step reaction: proline is first activated by ATP to form Pro-AMP and then transferred to the acceptor end of tRNA(Pro). As ProRS can inadvertently accommodate and process non-cognate amino acids such as alanine and cysteine, to avoid such errors it has two additional distinct editing activities against alanine. One activity is designated as 'pretransfer' editing and involves the tRNA(Pro)-independent hydrolysis of activated Ala-AMP. The other activity is designated 'posttransfer' editing and involves deacylation of mischarged Ala-tRNA(Pro). The misacylated Cys-tRNA(Pro) is not edited by ProRS. The chain is Proline--tRNA ligase from Corynebacterium efficiens (strain DSM 44549 / YS-314 / AJ 12310 / JCM 11189 / NBRC 100395).